The sequence spans 341 residues: tRNA N6-adenosine threonylcarbamoyltransferase (341 aa).

H111 and H115 together coordinate Fe cation. Substrate contacts are provided by residues 133 to 137, D166, G179, D183, and N273; that span reads AVSGG. D301 provides a ligand contact to Fe cation.

It belongs to the KAE1 / TsaD family. Fe(2+) is required as a cofactor.

It is found in the cytoplasm. It catalyses the reaction L-threonylcarbamoyladenylate + adenosine(37) in tRNA = N(6)-L-threonylcarbamoyladenosine(37) in tRNA + AMP + H(+). Its function is as follows. Required for the formation of a threonylcarbamoyl group on adenosine at position 37 (t(6)A37) in tRNAs that read codons beginning with adenine. Is involved in the transfer of the threonylcarbamoyl moiety of threonylcarbamoyl-AMP (TC-AMP) to the N6 group of A37, together with TsaE and TsaB. TsaD likely plays a direct catalytic role in this reaction. The polypeptide is tRNA N6-adenosine threonylcarbamoyltransferase (Geotalea daltonii (strain DSM 22248 / JCM 15807 / FRC-32) (Geobacter daltonii)).